The chain runs to 348 residues: Mannonate dehydratase (348 aa).

Belongs to the mannonate dehydratase family. Requires Fe(2+) as cofactor. Mn(2+) serves as cofactor.

The catalysed reaction is D-mannonate = 2-dehydro-3-deoxy-D-gluconate + H2O. It participates in carbohydrate metabolism; pentose and glucuronate interconversion. Its function is as follows. Catalyzes the dehydration of D-mannonate. This Streptococcus agalactiae serotype III (strain NEM316) protein is Mannonate dehydratase.